A 359-amino-acid chain; its full sequence is Ni-sirohydrochlorin a,c-diamide reductive cyclase complex, component CfbD (359 aa).

It belongs to the NifD/NifK/NifE/NifN family. Homodimer or monomer. The Ni-sirohydrochlorin a,c-diamide reductive cyclase complex is composed of a NifH homolog component CfbC and a NifD homolog component CfbD. Requires [4Fe-4S] cluster as cofactor.

The enzyme catalyses Ni-sirohydrochlorin a,c-diamide + 3 AH2 + ATP + H2O = 15,17(3)-seco-F430-17(3)-acid + 3 A + ADP + phosphate. Its function is as follows. Involved in the biosynthesis of the unique nickel-containing tetrapyrrole coenzyme F430, the prosthetic group of methyl-coenzyme M reductase (MCR), which plays a key role in methanogenesis and anaerobic methane oxidation. Catalyzes both the six-electron reduction of the tetrahydroporphyrin ring system and the gamma-lactamization of the c-acetamide side chain of Ni-sirohydrochlorin a,c-diamide to yield 15,17(3)-seco-F430-17(3)-acid (seco-F430), the last intermediate in the biosynthesis of the coenzyme F430. The chain is Ni-sirohydrochlorin a,c-diamide reductive cyclase complex, component CfbD from Methanothermobacter thermautotrophicus (strain ATCC 29096 / DSM 1053 / JCM 10044 / NBRC 100330 / Delta H) (Methanobacterium thermoautotrophicum).